Reading from the N-terminus, the 266-residue chain is Pre-mRNA-splicing factor CWC26 (266 aa).

Disordered regions lie at residues Met-1 to Ser-37 and Thr-118 to Asp-149. A compositionally biased stretch (basic residues) spans Pro-16–Glu-26. The span at Ile-122–Asp-149 shows a compositional bias: basic and acidic residues.

Belongs to the CWC26 family. Belongs to the pre-mRNA retention and splicing (RES) complex composed of at least BUD13, IST3 and PML1. May also belong to the CWC complex (or CEF1-associated complex) composed of the U2, U5 and U6 snRNAs and at least BUD13, BUD31, BRR2, CDC40, CEF1, CLF1, CUS1, CWC2, CWC15, CWC21, CWC22, CWC23, CWC24, CWC25, CWC27, ECM2, HSH155, IST3, ISY1, LEA1, MSL1, NTC20, PRP8, PRP9, PRP11, PRP19, PRP21, PRP22, PRP45, PRP46, SLU7, SMB1, SMD1, SMD2, SMD3, SMX2, SMX3, SNT309, SNU114, SPP2, SYF1, SYF2, RSE1 and YJU2. Interacts with IST3 and PML1.

It is found in the cytoplasm. The protein localises to the nucleus. Required for efficient splicing and pre-mRNA nuclear retention. May also be involved in positioning the proximal bud pole signal. This Saccharomyces cerevisiae (strain ATCC 204508 / S288c) (Baker's yeast) protein is Pre-mRNA-splicing factor CWC26 (BUD13).